The sequence spans 164 residues: Pyruvoyl-dependent arginine decarboxylase (164 aa).

Residue Ser-52 is modified to Pyruvic acid (Ser).

The protein belongs to the PdaD family. Pyruvate is required as a cofactor.

It catalyses the reaction L-arginine + H(+) = agmatine + CO2. The protein is Pyruvoyl-dependent arginine decarboxylase of Methanococcus maripaludis (strain C7 / ATCC BAA-1331).